A 681-amino-acid chain; its full sequence is UvrABC system protein C (681 aa).

The 80-residue stretch at 16 to 95 (DSPGVYKFRD…IKEYDPRFNV (80 aa)) folds into the GIY-YIG domain. Residues 208–243 (GTYIRRLERQMTDAAEEMEYEKAARLRDDIGALKKA) enclose the UVR domain. Residues 650-681 (EIMEDEEPGTTAGSSQEPVSAGTSDERRGQET) form a disordered region. The segment covering 660 to 672 (TAGSSQEPVSAGT) has biased composition (polar residues).

It belongs to the UvrC family. As to quaternary structure, interacts with UvrB in an incision complex.

It is found in the cytoplasm. Functionally, the UvrABC repair system catalyzes the recognition and processing of DNA lesions. UvrC both incises the 5' and 3' sides of the lesion. The N-terminal half is responsible for the 3' incision and the C-terminal half is responsible for the 5' incision. This is UvrABC system protein C from Streptomyces avermitilis (strain ATCC 31267 / DSM 46492 / JCM 5070 / NBRC 14893 / NCIMB 12804 / NRRL 8165 / MA-4680).